The sequence spans 349 residues: Hydroxymethylglutaryl-CoA synthase (349 aa).

Residues aspartate 29 and alanine 30 each contribute to the (3S)-3-hydroxy-3-methylglutaryl-CoA site. Catalysis depends on glutamate 81, which acts as the Proton donor/acceptor. (3S)-3-hydroxy-3-methylglutaryl-CoA is bound by residues cysteine 113 and threonine 154. Cysteine 113 serves as the catalytic Acyl-thioester intermediate. Arginine 202 contributes to the CoA binding site. (3S)-3-hydroxy-3-methylglutaryl-CoA contacts are provided by threonine 204 and histidine 237. The Proton donor/acceptor role is filled by histidine 237. Lysine 242 is a CoA binding site. Lysine 246, asparagine 269, and serine 299 together coordinate (3S)-3-hydroxy-3-methylglutaryl-CoA.

Belongs to the thiolase-like superfamily. Archaeal HMG-CoA synthase family. Interacts with acetoacetyl-CoA thiolase that catalyzes the precedent step in the pathway and with a DUF35 protein. The acetoacetyl-CoA thiolase/HMG-CoA synthase complex channels the intermediate via a fused CoA-binding site, which allows for efficient coupling of the endergonic thiolase reaction with the exergonic HMGCS reaction.

The enzyme catalyses acetoacetyl-CoA + acetyl-CoA + H2O = (3S)-3-hydroxy-3-methylglutaryl-CoA + CoA + H(+). Its pathway is metabolic intermediate biosynthesis; (R)-mevalonate biosynthesis; (R)-mevalonate from acetyl-CoA: step 2/3. Functionally, catalyzes the condensation of acetyl-CoA with acetoacetyl-CoA to form 3-hydroxy-3-methylglutaryl-CoA (HMG-CoA). Functions in the mevalonate (MVA) pathway leading to isopentenyl diphosphate (IPP), a key precursor for the biosynthesis of isoprenoid compounds that are building blocks of archaeal membrane lipids. The chain is Hydroxymethylglutaryl-CoA synthase from Methanosarcina acetivorans (strain ATCC 35395 / DSM 2834 / JCM 12185 / C2A).